Here is a 358-residue protein sequence, read N- to C-terminus: Molybdenum import ATP-binding protein ModC 2 (358 aa).

The ABC transporter domain maps to 1 to 234 (MPEQGIEAQL…PRLPLNHPDE (234 aa)). Residue 35-42 (GRSGSGKT) coordinates ATP. Residues 293–358 (NSSILNILRV…AQIKSVALME (66 aa)) enclose the Mop domain.

It belongs to the ABC transporter superfamily. Molybdate importer (TC 3.A.1.8) family. The complex is composed of two ATP-binding proteins (ModC), two transmembrane proteins (ModB) and a solute-binding protein (ModA).

The protein localises to the cell inner membrane. The enzyme catalyses molybdate(out) + ATP + H2O = molybdate(in) + ADP + phosphate + H(+). In terms of biological role, part of the ABC transporter complex ModABC involved in molybdenum import. Responsible for energy coupling to the transport system. In Azotobacter vinelandii, this protein is Molybdenum import ATP-binding protein ModC 2.